The primary structure comprises 706 residues: Protein kinase C theta type (706 aa).

Residues 1–107 (MSPFLRIGLS…KNNGKTEIWL (107 aa)) form the C2 domain. Phosphotyrosine; by LCK is present on Tyr90. The segment at 159–209 (CHEFTATFFPQPTFCSVCHEFVWGLNKQGYQCRQCNAAIHKKCIDKVIAKC) adopts a Phorbol-ester/DAG-type 1 zinc-finger fold. At Thr219 the chain carries Phosphothreonine; by autocatalysis. Residues 231 to 281 (PHRFKVYNYKSPTFCEHCGTLLWGLARQGLKCDACGMNVHHRCQTKVANLC) form a Phorbol-ester/DAG-type 2 zinc finger. The residue at position 348 (Ser348) is a Phosphoserine. The Protein kinase domain occupies 380–634 (FILHKMLGKG…RGDIRQHPLF (255 aa)). Residues 386–394 (LGKGSFGKV) and Lys409 each bind ATP. The Proton acceptor role is filled by Asp504. Thr538 is modified (phosphothreonine; by PDPK1). Residues 635 to 706 (REINWEELER…MNPGMERLIS (72 aa)) form the AGC-kinase C-terminal domain. A phosphoserine mark is found at Ser676, Ser685, and Ser695.

It belongs to the protein kinase superfamily. AGC Ser/Thr protein kinase family. PKC subfamily. In terms of assembly, part of a lipid raft complex composed at least of BCL10, CARD11, MALT1 and IKBKB. Interacts with GLRX3 (via N-terminus). Interacts with ECT2. Interacts with CCDC88A/GIV; the interaction leads to phosphorylation of CCDC88A and inhibition of its guanine nucleotide exchange factor activity. Interacts with PRKCH upstream open reading frame 2; the interaction leads to inhibition of kinase activity. Interacts with CD28. It depends on Mg(2+) as a cofactor. Autophosphorylation at Thr-219 is required for targeting to the TCR and cellular function of PRKCQ upon antigen receptor ligation. Following TCR stimulation, phosphorylated at Tyr-90 and Ser-685. Expressed in skeletal muscle, T-cells, megakaryoblastic cells and platelets.

It is found in the cytoplasm. Its subcellular location is the cell membrane. The catalysed reaction is L-seryl-[protein] + ATP = O-phospho-L-seryl-[protein] + ADP + H(+). The enzyme catalyses L-threonyl-[protein] + ATP = O-phospho-L-threonyl-[protein] + ADP + H(+). Its activity is regulated as follows. Novel PKCs (PRKCD, PRKCE, PRKCH and PRKCQ) are calcium-insensitive, but activated by diacylglycerol (DAG) and phosphatidylserine. Three specific sites; Thr-538 (activation loop of the kinase domain), Ser-676 (turn motif) and Ser-695 (hydrophobic region), need to be phosphorylated for its full activation. Inhibited by PRKCH upstream open reading frame 2. Calcium-independent, phospholipid- and diacylglycerol (DAG)-dependent serine/threonine-protein kinase that mediates non-redundant functions in T-cell receptor (TCR) signaling, including T-cells activation, proliferation, differentiation and survival, by mediating activation of multiple transcription factors such as NF-kappa-B, JUN, NFATC1 and NFATC2. In TCR-CD3/CD28-co-stimulated T-cells, is required for the activation of NF-kappa-B and JUN, which in turn are essential for IL2 production, and participates in the calcium-dependent NFATC1 and NFATC2 transactivation. Mediates the activation of the canonical NF-kappa-B pathway (NFKB1) by direct phosphorylation of CARD11 on several serine residues, inducing CARD11 association with lipid rafts and recruitment of the BCL10-MALT1 complex, which then activates IKK complex, resulting in nuclear translocation and activation of NFKB1. May also play an indirect role in activation of the non-canonical NF-kappa-B (NFKB2) pathway. In the signaling pathway leading to JUN activation, acts by phosphorylating the mediator STK39/SPAK and may not act through MAP kinases signaling. Plays a critical role in TCR/CD28-induced NFATC1 and NFATC2 transactivation by participating in the regulation of reduced inositol 1,4,5-trisphosphate generation and intracellular calcium mobilization. After costimulation of T-cells through CD28 can phosphorylate CBLB and is required for the ubiquitination and subsequent degradation of CBLB, which is a prerequisite for the activation of TCR. During T-cells differentiation, plays an important role in the development of T-helper 2 (Th2) cells following immune and inflammatory responses, and, in the development of inflammatory autoimmune diseases, is necessary for the activation of IL17-producing Th17 cells. May play a minor role in Th1 response. Upon TCR stimulation, mediates T-cell protective survival signal by phosphorylating BAD, thus protecting T-cells from BAD-induced apoptosis, and by up-regulating BCL-X(L)/BCL2L1 levels through NF-kappa-B and JUN pathways. In platelets, regulates signal transduction downstream of the ITGA2B, CD36/GP4, F2R/PAR1 and F2RL3/PAR4 receptors, playing a positive role in 'outside-in' signaling and granule secretion signal transduction. May relay signals from the activated ITGA2B receptor by regulating the uncoupling of WASP and WIPF1, thereby permitting the regulation of actin filament nucleation and branching activity of the Arp2/3 complex. May mediate inhibitory effects of free fatty acids on insulin signaling by phosphorylating IRS1, which in turn blocks IRS1 tyrosine phosphorylation and downstream activation of the PI3K/AKT pathway. Phosphorylates MSN (moesin) in the presence of phosphatidylglycerol or phosphatidylinositol. Phosphorylates PDPK1 at 'Ser-504' and 'Ser-532' and negatively regulates its ability to phosphorylate PKB/AKT1. Phosphorylates CCDC88A/GIV and inhibits its guanine nucleotide exchange factor activity. Phosphorylates and activates LRRK1, which phosphorylates RAB proteins involved in intracellular trafficking. The protein is Protein kinase C theta type (PRKCQ) of Homo sapiens (Human).